The chain runs to 338 residues: D-erythrose-4-phosphate dehydrogenase (338 aa).

12–13 (RI) lines the NAD(+) pocket. Substrate is bound by residues 154 to 156 (SCT), Arg200, 213 to 214 (TK), and Arg236. The active-site Nucleophile is the Cys155. Asn318 provides a ligand contact to NAD(+).

This sequence belongs to the glyceraldehyde-3-phosphate dehydrogenase family. Epd subfamily. As to quaternary structure, homotetramer.

It localises to the cytoplasm. It carries out the reaction D-erythrose 4-phosphate + NAD(+) + H2O = 4-phospho-D-erythronate + NADH + 2 H(+). The protein operates within cofactor biosynthesis; pyridoxine 5'-phosphate biosynthesis; pyridoxine 5'-phosphate from D-erythrose 4-phosphate: step 1/5. Catalyzes the NAD-dependent conversion of D-erythrose 4-phosphate to 4-phosphoerythronate. In Pectobacterium atrosepticum (strain SCRI 1043 / ATCC BAA-672) (Erwinia carotovora subsp. atroseptica), this protein is D-erythrose-4-phosphate dehydrogenase.